We begin with the raw amino-acid sequence, 498 residues long: MASQGTKRSYEQMETDGERQNATEIRASVGKMIDGIGRFYIQMCTELKLSDYEGRLIQNSLTIERMVLSAFDERRNKYLEEHPSAGKDPKKTGGPIYKRVDGKWMRELVLYDKGEIRRIWRQANNGDDATAGLTHMMIWHSNLNDTTYQRTRALVRTGMDPRMCSLMQGSTLPRRSGAAGAAVKGVGTMVMELIRMIKRGINDRNFWRGENGRKTRSAYERMCNILKGKFQTAAQRAMMDQVRESRNPGNAEIEDLIFLARSALILRGSVAHKSCLPACVYGPAVASGYDFEKEGYSLVGIDPFKLLQNSQVYSLIRPNENPAHKSQLVWMACNSAAFEDLRVLSFIRGTKVSPRGKLSTRGVQIASNENMDAMESSTLELRSRYWAIRTRSGGNTNQQRASAGQISVQPAFSVQRNLPFDKPTIMAAFTGNTEGRTSDMRAEIIRMMEGAKPEEMSFQGRGVFELSDEKAANPIVPSFDMSNEGSYFFGDNAEEYDN.

The Unconventional nuclear localization signal motif lies at 1-18 (MASQGTKRSYEQMETDGE). Residues 1–21 (MASQGTKRSYEQMETDGERQN) form a disordered region. Basic and acidic residues predominate over residues 8-21 (RSYEQMETDGERQN). The Bipartite nuclear localization signal signature appears at 198 to 216 (KRGINDRNFWRGENGRKTR).

This sequence belongs to the influenza viruses nucleoprotein family. As to quaternary structure, homomultimerizes to form the nucleocapsid. May bind host exportin-1/XPO1. Binds to viral genomic RNA. Protein-RNA contacts are mediated by a combination of electrostatic interactions between positively charged residues and the phosphate backbone and planar interactions between aromatic side chains and bases. Late in virus-infected cells, may be cleaved from a 56-kDa protein to a 53-kDa protein by a cellular caspase. This cleavage might be a marker for the onset of apoptosis in infected cells or have a specific function in virus host interaction.

Its subcellular location is the virion. It localises to the host nucleus. Its function is as follows. Encapsidates the negative strand viral RNA, protecting it from nucleases. The encapsidated genomic RNA is termed the ribonucleoprotein (RNP) and serves as template for transcription and replication. The RNP needs to be localized in the host nucleus to start an infectious cycle, but is too large to diffuse through the nuclear pore complex. NP comprises at least 2 nuclear localization signals that are responsible for the active RNP import into the nucleus through cellular importin alpha/beta pathway. Later in the infection, nclear export of RNPs are mediated through viral proteins NEP interacting with M1 which binds nucleoproteins. It is possible that nucleoprotein binds directly host exportin-1/XPO1 and plays an active role in RNPs nuclear export. M1 interaction with RNP seems to hide nucleoprotein's nuclear localization signals. Soon after a virion infects a new cell, M1 dissociates from the RNP under acidification of the virion driven by M2 protein. Dissociation of M1 from RNP unmasks nucleoprotein's nuclear localization signals, targeting the RNP to the nucleus. This is Nucleoprotein from Aves (whales).